Consider the following 491-residue polypeptide: Serralysin (491 aa).

Residues 1 to 16 (MGSFLLKKAVGLSNIS) constitute a propeptide that is removed on maturation. H186 serves as a coordination point for Zn(2+). E187 is a catalytic residue. Zn(2+)-binding residues include H190, H196, and Y226. Ca(2+)-binding residues include R263, G265, D295, G297, G298, D300, T337, E339, G344, G346, D348, N353, A355, N357, G361, G362, G364, D366, G370, G373, D384, G388, G389, G391, D402, D409, and D419. Hemolysin-type calcium-binding repeat units lie at residues 342 to 359 (IGGFGNDIIHGNDADNTL), 360 to 377 (IGGEGDDIIYGHSGNNTI), and 378 to 395 (YGGRGQDTLHGGTGSNTF).

This sequence belongs to the peptidase M10B family. The cofactor is Ca(2+). Zn(2+) is required as a cofactor.

It localises to the secreted. It catalyses the reaction Preferential cleavage of bonds with hydrophobic residues in P1'.. Its activity is regulated as follows. Ca(2+) increases protease activity. Its function is as follows. One of the virulence factors produced during swarmer cell differentiation of the bacteria, which seems to be associated with pathogenesis. The protease activity is limited to IgA1, IgA2, as well as IgG degradation. The protein is Serralysin (zapA) of Proteus mirabilis.